The primary structure comprises 359 residues: 3-dehydroquinate synthase (359 aa).

NAD(+)-binding positions include 72-77, 106-110, 130-131, lysine 143, and lysine 152; these read DGEHYK, GVIGD, and TT. Zn(2+)-binding residues include glutamate 185, histidine 248, and histidine 265.

The protein belongs to the sugar phosphate cyclases superfamily. Dehydroquinate synthase family. Co(2+) is required as a cofactor. Requires Zn(2+) as cofactor. NAD(+) serves as cofactor.

The protein localises to the cytoplasm. It carries out the reaction 7-phospho-2-dehydro-3-deoxy-D-arabino-heptonate = 3-dehydroquinate + phosphate. The protein operates within metabolic intermediate biosynthesis; chorismate biosynthesis; chorismate from D-erythrose 4-phosphate and phosphoenolpyruvate: step 2/7. Its function is as follows. Catalyzes the conversion of 3-deoxy-D-arabino-heptulosonate 7-phosphate (DAHP) to dehydroquinate (DHQ). The chain is 3-dehydroquinate synthase from Thermodesulfovibrio yellowstonii (strain ATCC 51303 / DSM 11347 / YP87).